The primary structure comprises 497 residues: B3 domain-containing protein REM1 (497 aa).

3 consecutive DNA-binding regions (TF-B3) follow at residues 7–92 (PSLF…SSES), 142–239 (FLRA…LCSH), and 278–379 (FLTQ…HSKI). The segment at 87 to 135 (AVSSESDDDESDDTDDSESDDESNDTDDSESDDSEDNGEGDSSLVNKEA) is disordered. Residues 91–125 (ESDDDESDDTDDSESDDESNDTDDSESDDSEDNGE) show a composition bias toward acidic residues.

In terms of tissue distribution, specifically expressed in the reproductive meristem.

Its subcellular location is the nucleus. May play a role in flower development. This is B3 domain-containing protein REM1 (REM1) from Brassica oleracea var. botrytis (Cauliflower).